We begin with the raw amino-acid sequence, 140 residues long: Holo-[acyl-carrier-protein] synthase (140 aa).

Mg(2+)-binding residues include Asp-8 and Glu-57.

Belongs to the P-Pant transferase superfamily. AcpS family. Mg(2+) serves as cofactor.

The protein localises to the cytoplasm. The enzyme catalyses apo-[ACP] + CoA = holo-[ACP] + adenosine 3',5'-bisphosphate + H(+). Functionally, transfers the 4'-phosphopantetheine moiety from coenzyme A to a Ser of acyl-carrier-protein. This chain is Holo-[acyl-carrier-protein] synthase, found in Beijerinckia indica subsp. indica (strain ATCC 9039 / DSM 1715 / NCIMB 8712).